A 308-amino-acid chain; its full sequence is Porphobilinogen deaminase (308 aa).

At C243 the chain carries S-(dipyrrolylmethanemethyl)cysteine.

Belongs to the HMBS family. As to quaternary structure, monomer. It depends on dipyrromethane as a cofactor.

The catalysed reaction is 4 porphobilinogen + H2O = hydroxymethylbilane + 4 NH4(+). It functions in the pathway porphyrin-containing compound metabolism; protoporphyrin-IX biosynthesis; coproporphyrinogen-III from 5-aminolevulinate: step 2/4. Its function is as follows. Tetrapolymerization of the monopyrrole PBG into the hydroxymethylbilane pre-uroporphyrinogen in several discrete steps. The protein is Porphobilinogen deaminase of Nitrosomonas europaea (strain ATCC 19718 / CIP 103999 / KCTC 2705 / NBRC 14298).